Consider the following 356-residue polypeptide: Heparan sulfate 2-O-sulfotransferase 1 (356 aa).

The Cytoplasmic portion of the chain corresponds to Met-1–Lys-11. A helical; Signal-anchor for type II membrane protein membrane pass occupies residues Leu-12–Glu-28. A coiled-coil region spans residues Met-24–Arg-51. The Lumenal portion of the chain corresponds to Asn-29–Asn-356. Positions 83, 84, 85, 86, 87, and 88 each coordinate adenosine 3',5'-bisphosphate. N-linked (GlcNAc...) asparagine glycosylation is found at Asn-108 and Asn-127. Residues His-140 and His-142 contribute to the active site. Residues Arg-164 and Ser-172 each coordinate adenosine 3',5'-bisphosphate. 2 disulfide bridges follow: Cys-201–Cys-209 and Cys-222–Cys-228. Positions 279, 285, 290, and 293 each coordinate adenosine 3',5'-bisphosphate.

Belongs to the sulfotransferase 3 family. As to quaternary structure, homotrimer. Interacts with the C5-epimerase GLCE. N-glycosylated.

The protein localises to the golgi apparatus membrane. In terms of biological role, catalyzes the transfer of a sulfo group from 3'-phospho-5'-adenylyl sulfate (PAPS) to the 2-OH position of iduronic acid (IdoA) or glucuronic acid (GlcA) within the heparan sulfate (HS) chain and participates in HS biosynthesis. Required for metanephric development of kidney formation, suggesting that 2-O-sulfation within HS is essential for signaling between ureteric bud and metanephric mesenchyme. In Cricetulus griseus (Chinese hamster), this protein is Heparan sulfate 2-O-sulfotransferase 1.